A 963-amino-acid polypeptide reads, in one-letter code: VPS35 endosomal protein-sorting factor-like (963 aa).

The disordered stretch occupies residues 43-112 (SKTKKVSRKG…DKDENSFVGP (70 aa)). The span at 51–72 (KGSTSSTSSSSSSSVIDPLSSV) shows a compositional bias: low complexity. Ser265 carries the post-translational modification Phosphoserine. Residues 699 to 719 (AFVRACVAYCFITIPSLVGIF) traverse the membrane as a helical segment.

It belongs to the VPS35L family. In terms of assembly, component of the heterotrimeric retriever complex formed by VPS26C, VPS29 and VPS35L. Interacts with VPS29. Interacts with COMMD1, CCDC93 and CCDC22; associates with the CCC (COMMD/CCDC22/CCDC93) complex which contains at least COMMD1 (and possibly other COMM domain-containing proteins), CCDC22 and CCDC93. Interacts with WASHC1, WASHC2A and WASHC2C. Interacts with SNX17 and SNX31.

It is found in the membrane. The protein localises to the endosome. Functionally, acts as a component of the retriever complex. The retriever complex is a heterotrimeric complex related to retromer cargo-selective complex (CSC) and essential for retromer-independent retrieval and recycling of numerous cargos such as integrin alpha-5/beta-1 (ITGA5:ITGB1). The recruitment of the retriever complex to the endosomal membrane involves CCC and WASH complexes. In the endosomes, drives the retrieval and recycling of NxxY-motif-containing cargo proteins by coupling to SNX17, a cargo essential for the homeostatic maintenance of numerous cell surface proteins associated with processes that include cell migration, cell adhesion, nutrient supply and cell signaling. Involved in copper-dependent ATP7A trafficking between the trans-Golgi network and vesicles in the cell periphery; the function is proposed to depend on its association with the CCC complex and cooperation with the WASH complex on early endosomes. Seems not to be required for CCC complex stability. This Mus musculus (Mouse) protein is VPS35 endosomal protein-sorting factor-like.